We begin with the raw amino-acid sequence, 186 residues long: Pyridoxal 5'-phosphate synthase subunit PdxT (186 aa).

46-48 contacts L-glutamine; it reads GES. Catalysis depends on Cys75, which acts as the Nucleophile. L-glutamine contacts are provided by residues Arg101 and 128-129; that span reads IR. Active-site charge relay system residues include His165 and Glu167.

It belongs to the glutaminase PdxT/SNO family. As to quaternary structure, in the presence of PdxS, forms a dodecamer of heterodimers. Only shows activity in the heterodimer.

It carries out the reaction aldehydo-D-ribose 5-phosphate + D-glyceraldehyde 3-phosphate + L-glutamine = pyridoxal 5'-phosphate + L-glutamate + phosphate + 3 H2O + H(+). The catalysed reaction is L-glutamine + H2O = L-glutamate + NH4(+). The protein operates within cofactor biosynthesis; pyridoxal 5'-phosphate biosynthesis. Its function is as follows. Catalyzes the hydrolysis of glutamine to glutamate and ammonia as part of the biosynthesis of pyridoxal 5'-phosphate. The resulting ammonia molecule is channeled to the active site of PdxS. The protein is Pyridoxal 5'-phosphate synthase subunit PdxT of Methanocaldococcus jannaschii (strain ATCC 43067 / DSM 2661 / JAL-1 / JCM 10045 / NBRC 100440) (Methanococcus jannaschii).